Here is a 196-residue protein sequence, read N- to C-terminus: Ribosome maturation factor RimP (196 aa).

A disordered region spans residues 164-196 (LAPQKPNKPGPKKPGHDKKKPSNEPAAGKPRAE). Residues 173–182 (GPKKPGHDKK) show a composition bias toward basic residues.

The protein belongs to the RimP family.

Its subcellular location is the cytoplasm. In terms of biological role, required for maturation of 30S ribosomal subunits. The chain is Ribosome maturation factor RimP from Xanthomonas campestris pv. campestris (strain 8004).